The sequence spans 439 residues: Methylenetetrahydrofolate--tRNA-(uracil-5-)-methyltransferase TrmFO (439 aa).

Residue 8 to 13 (GAGLAG) participates in FAD binding.

The protein belongs to the MnmG family. TrmFO subfamily. It depends on FAD as a cofactor.

It localises to the cytoplasm. The catalysed reaction is uridine(54) in tRNA + (6R)-5,10-methylene-5,6,7,8-tetrahydrofolate + NADH + H(+) = 5-methyluridine(54) in tRNA + (6S)-5,6,7,8-tetrahydrofolate + NAD(+). The enzyme catalyses uridine(54) in tRNA + (6R)-5,10-methylene-5,6,7,8-tetrahydrofolate + NADPH + H(+) = 5-methyluridine(54) in tRNA + (6S)-5,6,7,8-tetrahydrofolate + NADP(+). Its function is as follows. Catalyzes the folate-dependent formation of 5-methyl-uridine at position 54 (M-5-U54) in all tRNAs. The sequence is that of Methylenetetrahydrofolate--tRNA-(uracil-5-)-methyltransferase TrmFO from Magnetococcus marinus (strain ATCC BAA-1437 / JCM 17883 / MC-1).